The following is a 149-amino-acid chain: Arginine repressor (149 aa).

It belongs to the ArgR family.

It is found in the cytoplasm. Its pathway is amino-acid biosynthesis; L-arginine biosynthesis [regulation]. In terms of biological role, regulates arginine biosynthesis genes. This chain is Arginine repressor, found in Listeria welshimeri serovar 6b (strain ATCC 35897 / DSM 20650 / CCUG 15529 / CIP 8149 / NCTC 11857 / SLCC 5334 / V8).